A 347-amino-acid chain; its full sequence is Homocysteine S-methyltransferase 3 (347 aa).

In terms of domain architecture, Hcy-binding spans 12–333; sequence LMTDFLEKCG…NTIRAIAKVL (322 aa). 3 residues coordinate Zn(2+): C251, C318, and C319.

As to quaternary structure, monomer. Requires Zn(2+) as cofactor. Expressed predominantly in rosette leaves. Expressed in roots, cauline leaves and developing seeds.

The catalysed reaction is S-methyl-L-methionine + L-homocysteine = 2 L-methionine + H(+). Its function is as follows. Catalyzes methyl transfer from S-methylmethionine (SMM) to adenosyl-L-homocysteine (AdoMet). SMM degradation (by HMT-1, HMT-2 and HMT-3) and biosynthesis (by MMT1) constitute the SMM cycle in plants, which is probably required to achieve short term control of AdoMet level. This Arabidopsis thaliana (Mouse-ear cress) protein is Homocysteine S-methyltransferase 3 (HMT3).